The sequence spans 269 residues: Endo-1,3-1,4-beta-glycanase ExoK (269 aa).

An N-terminal signal peptide occupies residues 1–29 (MTIDRYRRFARLAFIATLPLAGLATAAAA). Positions 40–252 (DDFDTLDTRV…RVAFTAAGDE (213 aa)) constitute a GH16 domain. The Nucleophile role is filled by Glu-138. The Proton donor role is filled by Glu-142.

This sequence belongs to the glycosyl hydrolase 16 family.

Its subcellular location is the secreted. It functions in the pathway glycan metabolism; exopolysaccharide biosynthesis. Its function is as follows. Cleaves high molecular weight succinoglycan to yield LMW succinoglycan. Dynamically regulates the molecular weight distribution of succinoglycan by cleaving nascent succinoglycan only during a limited period after its synthesis, perhaps before it undergoes a time-dependent change in its conformation or aggregation state. In Rhizobium meliloti (strain 1021) (Ensifer meliloti), this protein is Endo-1,3-1,4-beta-glycanase ExoK (exoK).